Consider the following 240-residue polypeptide: MILLISDLHLQEERPDITRAFLDLLDGRARHAKALYILGDFFEAWIGDDAMTPFQRSICQALRQLSDSGTTIYLMHGNRDFLIGQAFCQAAGCTLLDDPSVIELGGEAVLLMHGDTLCTRDVGYMKLRRYLRNPLSLWILRHLPLSTRQKLARKLRSESKSQTRMKNTEIVDVTPDEVPKVMAAHGVRTLVHGHTHRPAIHKLVIDGQPARRIVLGDWDRRGWALQVDEQGFQLAPFEFS.

Mn(2+) contacts are provided by Asp-7, His-9, Asp-40, Asn-78, and His-113. 78–79 is a substrate binding site; sequence NR. Residues Asp-121, Ser-159, Thr-163, Lys-166, and His-194 each coordinate substrate. His-194 and His-196 together coordinate Mn(2+).

It belongs to the LpxH family. Mn(2+) serves as cofactor.

The protein localises to the cell inner membrane. It carries out the reaction UDP-2-N,3-O-bis[(3R)-3-hydroxytetradecanoyl]-alpha-D-glucosamine + H2O = 2-N,3-O-bis[(3R)-3-hydroxytetradecanoyl]-alpha-D-glucosaminyl 1-phosphate + UMP + 2 H(+). It functions in the pathway glycolipid biosynthesis; lipid IV(A) biosynthesis; lipid IV(A) from (3R)-3-hydroxytetradecanoyl-[acyl-carrier-protein] and UDP-N-acetyl-alpha-D-glucosamine: step 4/6. Hydrolyzes the pyrophosphate bond of UDP-2,3-diacylglucosamine to yield 2,3-diacylglucosamine 1-phosphate (lipid X) and UMP by catalyzing the attack of water at the alpha-P atom. Involved in the biosynthesis of lipid A, a phosphorylated glycolipid that anchors the lipopolysaccharide to the outer membrane of the cell. This Pseudomonas entomophila (strain L48) protein is UDP-2,3-diacylglucosamine hydrolase.